The chain runs to 207 residues: Claudin-11 (207 aa).

Residue M1 is a topological domain, cytoplasmic. A helical membrane pass occupies residues 2 to 22 (VATCLQVVGFVTSFVGWIGVI). Residues 23 to 82 (VTTSTNDWVVTCGYTIPTCRKLDELGSKGLWADCVMATGLYHCKPLVDILILPGYVQACR) are Extracellular-facing. The chain crosses the membrane as a helical span at residues 83-103 (ALMIAASVLGLPAILLLLTVL). The Cytoplasmic portion of the chain corresponds to 104–122 (PCIRMGQEPGVAKYRRAQL). The helical transmembrane segment at 123–143 (AGVLLILLALCALVATIWFPV) threads the bilayer. At 144 to 157 (CAHRETTIVSFGYS) the chain is on the extracellular side. Residues 158–178 (LYAGWIGAVLCLVGGCVILCC) form a helical membrane-spanning segment. Topologically, residues 179 to 207 (AGDAQAFGENRFYYTAGSSSPTHAKSAHV) are cytoplasmic. Residues S197 and S198 each carry the phosphoserine modification.

The protein belongs to the claudin family. In terms of assembly, interacts with tetraspanin-3/TSPAN3. Interacts with OCLN.

The protein resides in the cell junction. Its subcellular location is the tight junction. It localises to the cell membrane. Functionally, plays a major role in tight junction-specific obliteration of the intercellular space, through calcium-independent cell-adhesion activity. The protein is Claudin-11 (CLDN11) of Homo sapiens (Human).